The sequence spans 357 residues: Cytosolic Fe-S cluster assembly factor NAR1 (357 aa).

Residues cysteine 14, cysteine 28, cysteine 31, cysteine 34, cysteine 129, cysteine 172, cysteine 297, and cysteine 301 each contribute to the [4Fe-4S] cluster site.

The protein belongs to the NARF family.

Component of the cytosolic Fe/S protein assembly machinery. May play a role in the transfer of pre-assembled Fe/S clusters to target apoproteins. The protein is Cytosolic Fe-S cluster assembly factor NAR1 (NAR1) of Encephalitozoon cuniculi (strain GB-M1) (Microsporidian parasite).